We begin with the raw amino-acid sequence, 675 residues long: UvrABC system protein B (675 aa).

Positions 35-422 (EGVSDGLMFQ…ADNVVEQVVR (388 aa)) constitute a Helicase ATP-binding domain. ATP is bound at residue 48 to 55 (GVTGSGKT). The Beta-hairpin motif lies at 101 to 124 (YYDYYQPEAYVPTRDLFIEKDSSI). The region spanning 439–605 (QVDDLLGEIH…GVSKAVRELI (167 aa)) is the Helicase C-terminal domain. The UVR domain maps to 633–668 (AREIRRLEKLMMDHARNLEFEQAAAARDALNALKSR).

Belongs to the UvrB family. As to quaternary structure, forms a heterotetramer with UvrA during the search for lesions. Interacts with UvrC in an incision complex.

The protein localises to the cytoplasm. The UvrABC repair system catalyzes the recognition and processing of DNA lesions. A damage recognition complex composed of 2 UvrA and 2 UvrB subunits scans DNA for abnormalities. Upon binding of the UvrA(2)B(2) complex to a putative damaged site, the DNA wraps around one UvrB monomer. DNA wrap is dependent on ATP binding by UvrB and probably causes local melting of the DNA helix, facilitating insertion of UvrB beta-hairpin between the DNA strands. Then UvrB probes one DNA strand for the presence of a lesion. If a lesion is found the UvrA subunits dissociate and the UvrB-DNA preincision complex is formed. This complex is subsequently bound by UvrC and the second UvrB is released. If no lesion is found, the DNA wraps around the other UvrB subunit that will check the other stand for damage. In Bordetella bronchiseptica (strain ATCC BAA-588 / NCTC 13252 / RB50) (Alcaligenes bronchisepticus), this protein is UvrABC system protein B.